The primary structure comprises 203 residues: Nucleoside triphosphate pyrophosphatase (203 aa).

Asp78 functions as the Proton acceptor in the catalytic mechanism.

The protein belongs to the Maf family. A divalent metal cation is required as a cofactor.

It is found in the cytoplasm. It catalyses the reaction a ribonucleoside 5'-triphosphate + H2O = a ribonucleoside 5'-phosphate + diphosphate + H(+). The catalysed reaction is a 2'-deoxyribonucleoside 5'-triphosphate + H2O = a 2'-deoxyribonucleoside 5'-phosphate + diphosphate + H(+). Functionally, nucleoside triphosphate pyrophosphatase. May have a dual role in cell division arrest and in preventing the incorporation of modified nucleotides into cellular nucleic acids. The protein is Nucleoside triphosphate pyrophosphatase of Prochlorococcus marinus (strain MIT 9301).